We begin with the raw amino-acid sequence, 117 residues long: Immunoglobulin heavy variable 1-2 (117 aa).

The first 19 residues, M1–S19, serve as a signal peptide directing secretion. Residue Q20 is modified to Pyrrolidone carboxylic acid. The tract at residues Q20–S44 is framework-1. Residues Q20–R117 form the Ig-like domain. C41 and C115 are joined by a disulfide. Residues G45–Y52 are complementarity-determining-1. A framework-2 region spans residues M53–W69. The segment at I70–T77 is complementarity-determining-2. Residues N78 to C115 form a framework-3 region. Residues A116–R117 form a complementarity-determining-3 region.

As to quaternary structure, immunoglobulins are composed of two identical heavy chains and two identical light chains; disulfide-linked.

It is found in the secreted. It localises to the cell membrane. Functionally, v region of the variable domain of immunoglobulin heavy chains that participates in the antigen recognition. Immunoglobulins, also known as antibodies, are membrane-bound or secreted glycoproteins produced by B lymphocytes. In the recognition phase of humoral immunity, the membrane-bound immunoglobulins serve as receptors which, upon binding of a specific antigen, trigger the clonal expansion and differentiation of B lymphocytes into immunoglobulins-secreting plasma cells. Secreted immunoglobulins mediate the effector phase of humoral immunity, which results in the elimination of bound antigens. The antigen binding site is formed by the variable domain of one heavy chain, together with that of its associated light chain. Thus, each immunoglobulin has two antigen binding sites with remarkable affinity for a particular antigen. The variable domains are assembled by a process called V-(D)-J rearrangement and can then be subjected to somatic hypermutations which, after exposure to antigen and selection, allow affinity maturation for a particular antigen. In Homo sapiens (Human), this protein is Immunoglobulin heavy variable 1-2.